The chain runs to 211 residues: Shikimate kinase (211 aa).

Residues 1–22 are disordered; that stretch reads MHFRYNYRMQRSKTPNTKNSDT. Positions 12-22 are enriched in polar residues; that stretch reads SKTPNTKNSDT. 36-41 is an ATP binding site; that stretch reads GSGKTT. Residue Thr40 participates in Mg(2+) binding. Residues Asp58, Arg82, and Gly104 each coordinate substrate. Residue Arg142 participates in ATP binding. Arg161 contacts substrate. Gln178 contacts ATP.

Belongs to the shikimate kinase family. As to quaternary structure, monomer. Requires Mg(2+) as cofactor.

It localises to the cytoplasm. It carries out the reaction shikimate + ATP = 3-phosphoshikimate + ADP + H(+). Its pathway is metabolic intermediate biosynthesis; chorismate biosynthesis; chorismate from D-erythrose 4-phosphate and phosphoenolpyruvate: step 5/7. Functionally, catalyzes the specific phosphorylation of the 3-hydroxyl group of shikimic acid using ATP as a cosubstrate. This chain is Shikimate kinase, found in Nitrosomonas europaea (strain ATCC 19718 / CIP 103999 / KCTC 2705 / NBRC 14298).